The chain runs to 948 residues: Coatomer subunit beta-1 (948 aa).

HEAT repeat units lie at residues 49–87, 92–126, 127–164, 274–311, 312–349, and 391–428; these read ETIP…TDSK, PEMI…MKET, EIVE…LPQG, TAIR…TLHR, DIMV…HHNI, and EVAS…TNPK.

Oligomeric complex that consists of at least the alpha, beta, beta', gamma, delta, epsilon and zeta subunits.

The protein localises to the cytoplasm. Its subcellular location is the golgi apparatus membrane. It is found in the cytoplasmic vesicle. It localises to the COPI-coated vesicle membrane. Its function is as follows. The coatomer is a cytosolic protein complex that binds to dilysine motifs and reversibly associates with Golgi non-clathrin-coated vesicles, which further mediate biosynthetic protein transport from the ER, via the Golgi up to the trans Golgi network. Coatomer complex is required for budding from Golgi membranes, and is essential for the retrograde Golgi-to-ER transport of dilysine-tagged proteins. This chain is Coatomer subunit beta-1, found in Arabidopsis thaliana (Mouse-ear cress).